Here is a 337-residue protein sequence, read N- to C-terminus: D-alanine--D-alanine ligase (337 aa).

The region spanning 124–330 (KMWFSALGIP…FTEYLSLVIN (207 aa)) is the ATP-grasp domain. 154–209 (ALAQWGSIFVKAASQGSSVGCYKVDDSAKVAGVLKDAFGYAPYVIVEKTIKARELE) contacts ATP. The Mg(2+) site is built by Asp284, Glu297, and Asn299.

Belongs to the D-alanine--D-alanine ligase family. The cofactor is Mg(2+). It depends on Mn(2+) as a cofactor.

It localises to the cytoplasm. It carries out the reaction 2 D-alanine + ATP = D-alanyl-D-alanine + ADP + phosphate + H(+). The protein operates within cell wall biogenesis; peptidoglycan biosynthesis. Its function is as follows. Cell wall formation. This is D-alanine--D-alanine ligase from Shewanella baltica (strain OS223).